The sequence spans 136 residues: MFQSLIAIDYGKARIGIASGQMITKTATPIGTVEAYDGVPNWIELDKIIKRWNPSDIIIGLPLDTQNFETDITKAAKDFAKEVQQRYQRKVHLINEAYSTREARWRLEEVKSKKVSHIKVDALAACVILETWMSEN.

This sequence belongs to the YqgF nuclease family.

It localises to the cytoplasm. Its function is as follows. Could be a nuclease involved in processing of the 5'-end of pre-16S rRNA. The protein is Putative pre-16S rRNA nuclease of Francisella tularensis subsp. novicida (strain U112).